Consider the following 673-residue polypeptide: B3 domain-containing protein Os01g0905400 (673 aa).

Positions methionine 1–glutamate 34 are enriched in basic and acidic residues. The disordered stretch occupies residues methionine 1 to serine 44. The TF-B3 1 DNA-binding region spans leucine 79–serine 172. The segment at proline 315–glutamine 337 is disordered. Residues alanine 328–glutamine 337 show a composition bias toward basic and acidic residues. Residues serine 576–asparagine 671 constitute a DNA-binding region (TF-B3 2).

The protein resides in the nucleus. The sequence is that of B3 domain-containing protein Os01g0905400 from Oryza sativa subsp. japonica (Rice).